We begin with the raw amino-acid sequence, 296 residues long: Fructose-bisphosphate aldolase class 1 (296 aa).

The Proton acceptor role is filled by Glu-175. Lys-212 (schiff-base intermediate with dihydroxyacetone-P) is an active-site residue.

This sequence belongs to the class I fructose-bisphosphate aldolase family.

The enzyme catalyses beta-D-fructose 1,6-bisphosphate = D-glyceraldehyde 3-phosphate + dihydroxyacetone phosphate. It functions in the pathway carbohydrate degradation; glycolysis; D-glyceraldehyde 3-phosphate and glycerone phosphate from D-glucose: step 4/4. The protein is Fructose-bisphosphate aldolase class 1 of Staphylococcus epidermidis (strain ATCC 35984 / DSM 28319 / BCRC 17069 / CCUG 31568 / BM 3577 / RP62A).